A 161-amino-acid chain; its full sequence is Transcriptional repressor NrdR (161 aa).

The disordered stretch occupies residues 1–23 (MRCPFCGHPDTQVKDSRPAEDGN). Residues 3–34 (CPFCGHPDTQVKDSRPAEDGNAIRRRRQCPSC) fold into a zinc finger. Over residues 11–23 (TQVKDSRPAEDGN) the composition is skewed to basic and acidic residues. Residues 49-139 (LTVMKKSGRR…VYKDFHKVED (91 aa)) enclose the ATP-cone domain.

The protein belongs to the NrdR family. Zn(2+) is required as a cofactor.

Its function is as follows. Negatively regulates transcription of bacterial ribonucleotide reductase nrd genes and operons by binding to NrdR-boxes. In Maricaulis maris (strain MCS10) (Caulobacter maris), this protein is Transcriptional repressor NrdR.